The following is a 414-amino-acid chain: Esterase FrsA (414 aa).

This sequence belongs to the FrsA family.

The catalysed reaction is a carboxylic ester + H2O = an alcohol + a carboxylate + H(+). In terms of biological role, catalyzes the hydrolysis of esters. The chain is Esterase FrsA from Salmonella choleraesuis (strain SC-B67).